The following is a 636-amino-acid chain: Chaperone protein DnaK (636 aa).

Residue Thr198 is modified to Phosphothreonine; by autocatalysis. A disordered region spans residues 598–636 (YAAKEQPGEHGETGSGEQARKESGKDENVVDADFEEVKK). Residues 603–625 (QPGEHGETGSGEQARKESGKDEN) show a composition bias toward basic and acidic residues. A compositionally biased stretch (acidic residues) spans 626–636 (VVDADFEEVKK).

This sequence belongs to the heat shock protein 70 family.

In terms of biological role, acts as a chaperone. The sequence is that of Chaperone protein DnaK from Pelobacter propionicus (strain DSM 2379 / NBRC 103807 / OttBd1).